The chain runs to 223 residues: Ethylene-inducing xylanase (223 aa).

Positions 1 to 19 (MVSFTTLLAGFVAVTGVLS) are cleaved as a signal peptide. The GH11 domain occupies 34–223 (QTIGPGTGFN…SSGNANINVS (190 aa)). Asn94 is a glycosylation site (N-linked (GlcNAc...) asparagine). Glu119 acts as the Nucleophile in catalysis. The active-site Proton donor is Glu210.

This sequence belongs to the glycosyl hydrolase 11 (cellulase G) family. Interactc with tomato LeEix2 receptor to trigger its internalization.

It localises to the secreted. It catalyses the reaction Endohydrolysis of (1-&gt;4)-beta-D-xylosidic linkages in xylans.. Its pathway is glycan degradation; xylan degradation. Functionally, endo-1,4-beta-xylanase involved in the hydrolysis of xylan, a major structural heterogeneous polysaccharide found in plant biomass representing the second most abundant polysaccharide in the biosphere, after cellulose. Acts as an elicitor of plant defense responses in hosts such as tobacco (Nicotiana tabacum) or tomato (Solanum lycopersicum). Induces the production of ethylene and leads alterations in membrane function with rapid efflux of potassium, uptake of calcium, alkalization of the medium, increased leakage of cellular components and necrosis in plant hosts. EIX is translocated through the xylem of the host plant to the leaf mesophyll, leading to host response to pathogen-derived extracellular proteins in tissues distant from the invading pathogen. Greatly enhances the expression of two calcineurin B-like proteins-interacting protein kinases (CIPKs) family members, OsCIPK14 and OsCIPK15, in rice cultured cells. In tomato, triggers the defense response via binding to and subsequent internalization of the LeEix2 receptor. In Hypocrea rufa (Trichoderma viride), this protein is Ethylene-inducing xylanase.